Here is a 579-residue protein sequence, read N- to C-terminus: Probable cytochrome c biosynthesis protein (579 aa).

The protein belongs to the CcmF/CycK/Ccl1/NrfE/CcsA family.

The protein resides in the mitochondrion. In terms of biological role, could be involved in assembly and maturation of cytochromes c. May play a role in guidance of apocytochromes and heme groups for the covalent linkage introduced by the cytochrome-c-heme lyase. This is Probable cytochrome c biosynthesis protein from Daucus carota (Wild carrot).